The following is a 466-amino-acid chain: Cell division protein FtsP (466 aa).

The segment at residues Met1–Ala28 is a signal peptide (tat-type signal).

Belongs to the FtsP family. Post-translationally, predicted to be exported by the Tat system. The position of the signal peptide cleavage has not been experimentally proven.

Its subcellular location is the periplasm. Functionally, cell division protein that is required for growth during stress conditions. May be involved in protecting or stabilizing the divisomal assembly under conditions of stress. This Actinobacillus succinogenes (strain ATCC 55618 / DSM 22257 / CCUG 43843 / 130Z) protein is Cell division protein FtsP.